The following is a 735-amino-acid chain: Disintegrin and metalloproteinase domain-containing protein 2 (735 aa).

An N-terminal signal peptide occupies residues 1-15 (MLCLLLLLCGLASLG). A propeptide spanning residues 16 to 176 (GPLKKYVENS…KIKSIKSSVR (161 aa)) is cleaved from the precursor. Over 16–680 (GPLKKYVENS…EGAYHTKSRK (665 aa)) the chain is Extracellular. 3 N-linked (GlcNAc...) asparagine glycosylation sites follow: asparagine 55, asparagine 220, and asparagine 288. The 198-residue stretch at 178–375 (HYIEMHIIVE…QVSQCLQNQP (198 aa)) folds into the Peptidase M12B domain. Disulfide bonds link cysteine 287–cysteine 370, cysteine 329–cysteine 354, cysteine 331–cysteine 336, and cysteine 442–cysteine 455. N-linked (GlcNAc...) asparagine glycosylation occurs at asparagine 353. The region spanning 384 to 470 (NPVCGNNRVE…ACQEDLYVIN (87 aa)) is the Disintegrin domain. 2 N-linked (GlcNAc...) asparagine glycosylation sites follow: asparagine 456 and asparagine 564. The EGF-like domain maps to 610-643 (LGYDCTPATCSDHGVCNNKRHCHCNPTYVPPNCE). 3 cysteine pairs are disulfide-bonded: cysteine 614–cysteine 625, cysteine 619–cysteine 631, and cysteine 633–cysteine 642. The chain crosses the membrane as a helical span at residues 681-701 (WPFFLIIPFFVIFSVLVATVV). Topologically, residues 702 to 735 (KVYYQKKKWKTEDYANDENIESESEPKSSKVSSK) are cytoplasmic. A disordered region spans residues 716–735 (ANDENIESESEPKSSKVSSK). Serine 723 is modified (phosphoserine).

In terms of assembly, heterodimer with ADAM1/fertilin subunit alpha. In terms of processing, the signal and the metalloprotease domain are cleaved during the epididymal maturation of the spermatozoa. Expressed specifically in testis.

The protein resides in the membrane. Functionally, sperm surface membrane protein that may be involved in sperm-egg plasma membrane adhesion and fusion during fertilization. Could have a direct role in sperm-zona binding or migration of sperm from the uterus into the oviduct. Interactions with egg membrane could be mediated via binding between its disintegrin-like domain to one or more integrins receptors on the egg. This is a non catalytic metalloprotease-like protein. The chain is Disintegrin and metalloproteinase domain-containing protein 2 (ADAM2) from Cavia porcellus (Guinea pig).